A 456-amino-acid polypeptide reads, in one-letter code: Bifunctional protein GlmU (456 aa).

The pyrophosphorylase stretch occupies residues 1-229 (MLNSAMSVVI…LSEVEGVNNR (229 aa)). UDP-N-acetyl-alpha-D-glucosamine contacts are provided by residues 11-14 (LAAG), K25, Q76, 81-82 (GT), 103-105 (YGD), G140, E154, N169, and N227. D105 serves as a coordination point for Mg(2+). N227 lines the Mg(2+) pocket. Positions 230 to 250 (LQLSRLERVYQSEQAEKLLLA) are linker. Positions 251–456 (GVMLRDPARF…QGWQRPAKKK (206 aa)) are N-acetyltransferase. UDP-N-acetyl-alpha-D-glucosamine is bound by residues R333 and K351. Catalysis depends on H363, which acts as the Proton acceptor. UDP-N-acetyl-alpha-D-glucosamine-binding residues include Y366 and N377. Residues A380, 386 to 387 (NY), S405, A423, and R440 contribute to the acetyl-CoA site.

In the N-terminal section; belongs to the N-acetylglucosamine-1-phosphate uridyltransferase family. It in the C-terminal section; belongs to the transferase hexapeptide repeat family. Homotrimer. Requires Mg(2+) as cofactor.

The protein localises to the cytoplasm. The catalysed reaction is alpha-D-glucosamine 1-phosphate + acetyl-CoA = N-acetyl-alpha-D-glucosamine 1-phosphate + CoA + H(+). It catalyses the reaction N-acetyl-alpha-D-glucosamine 1-phosphate + UTP + H(+) = UDP-N-acetyl-alpha-D-glucosamine + diphosphate. Its pathway is nucleotide-sugar biosynthesis; UDP-N-acetyl-alpha-D-glucosamine biosynthesis; N-acetyl-alpha-D-glucosamine 1-phosphate from alpha-D-glucosamine 6-phosphate (route II): step 2/2. The protein operates within nucleotide-sugar biosynthesis; UDP-N-acetyl-alpha-D-glucosamine biosynthesis; UDP-N-acetyl-alpha-D-glucosamine from N-acetyl-alpha-D-glucosamine 1-phosphate: step 1/1. It functions in the pathway bacterial outer membrane biogenesis; LPS lipid A biosynthesis. Its function is as follows. Catalyzes the last two sequential reactions in the de novo biosynthetic pathway for UDP-N-acetylglucosamine (UDP-GlcNAc). The C-terminal domain catalyzes the transfer of acetyl group from acetyl coenzyme A to glucosamine-1-phosphate (GlcN-1-P) to produce N-acetylglucosamine-1-phosphate (GlcNAc-1-P), which is converted into UDP-GlcNAc by the transfer of uridine 5-monophosphate (from uridine 5-triphosphate), a reaction catalyzed by the N-terminal domain. This Citrobacter koseri (strain ATCC BAA-895 / CDC 4225-83 / SGSC4696) protein is Bifunctional protein GlmU.